A 318-amino-acid chain; its full sequence is GTP 3',8-cyclase (318 aa).

Residues Lys4–Glu218 form the Radical SAM core domain. Residue Arg13 participates in GTP binding. Cys20 and Cys24 together coordinate [4Fe-4S] cluster. Residue Tyr26 coordinates S-adenosyl-L-methionine. Cys27 contacts [4Fe-4S] cluster. Arg62 contributes to the GTP binding site. S-adenosyl-L-methionine is bound at residue Gly66. Thr93 lines the GTP pocket. Residue Ser117 coordinates S-adenosyl-L-methionine. Residue Lys154 participates in GTP binding. Met188 provides a ligand contact to S-adenosyl-L-methionine. 2 residues coordinate [4Fe-4S] cluster: Cys248 and Cys251. Lys253 to Arg255 contacts GTP. Position 265 (Cys265) interacts with [4Fe-4S] cluster.

This sequence belongs to the radical SAM superfamily. MoaA family. Monomer and homodimer. The cofactor is [4Fe-4S] cluster.

It carries out the reaction GTP + AH2 + S-adenosyl-L-methionine = (8S)-3',8-cyclo-7,8-dihydroguanosine 5'-triphosphate + 5'-deoxyadenosine + L-methionine + A + H(+). Its pathway is cofactor biosynthesis; molybdopterin biosynthesis. Catalyzes the cyclization of GTP to (8S)-3',8-cyclo-7,8-dihydroguanosine 5'-triphosphate. The protein is GTP 3',8-cyclase of Clostridium acetobutylicum (strain ATCC 824 / DSM 792 / JCM 1419 / IAM 19013 / LMG 5710 / NBRC 13948 / NRRL B-527 / VKM B-1787 / 2291 / W).